We begin with the raw amino-acid sequence, 512 residues long: tRNA-2-methylthio-N(6)-dimethylallyladenosine synthase (512 aa).

The 117-residue stretch at 17-133 folds into the MTTase N-terminal domain; sequence RTYEVRTFGC…LPTLLERSAH (117 aa). C26, C62, C96, C170, C174, and C177 together coordinate [4Fe-4S] cluster. The Radical SAM core domain occupies 156–392; sequence RESAYAGWVS…LALQERISEE (237 aa). The 67-residue stretch at 395–461 folds into the TRAM domain; it reads RKLIGTTQEL…PHFLIADGGV (67 aa). The tract at residues 473 to 512 is disordered; sequence TELGETPTTAPVGVGLGMPSIKKPEPTTAGGCSTGGCGCE.

This sequence belongs to the methylthiotransferase family. MiaB subfamily. Monomer. [4Fe-4S] cluster serves as cofactor.

It is found in the cytoplasm. The catalysed reaction is N(6)-dimethylallyladenosine(37) in tRNA + (sulfur carrier)-SH + AH2 + 2 S-adenosyl-L-methionine = 2-methylsulfanyl-N(6)-dimethylallyladenosine(37) in tRNA + (sulfur carrier)-H + 5'-deoxyadenosine + L-methionine + A + S-adenosyl-L-homocysteine + 2 H(+). Its function is as follows. Catalyzes the methylthiolation of N6-(dimethylallyl)adenosine (i(6)A), leading to the formation of 2-methylthio-N6-(dimethylallyl)adenosine (ms(2)i(6)A) at position 37 in tRNAs that read codons beginning with uridine. This Corynebacterium jeikeium (strain K411) protein is tRNA-2-methylthio-N(6)-dimethylallyladenosine synthase.